The chain runs to 298 residues: MSVLNVLESHVILHIIEFLPDHEKIKFMSTCKSLYEFRCHVTYNNFYVYDTINHLDFVNKFKKLIYLSIFNENSKNYDPTIIVKSIKDVIPPNTKCIIFDDDFDEDITEFIPEGIKYVVFGIHFNKPIKKILPNSIIHLILGFSFNQSISDILPCGLIELTLGHNFRQSINDIPNTITKLIFDSEFIPEIHGKIPTNINCLGIRGYFGKNHKKDIPNNIKHLIIGTDYHSKMCEVIEDSIDMIITENMTHITLGWNFDDTTFNIPNGVTHLILYQKFNPTIIKCLPSSVEHVEFISRW.

Residues 4–48 (LNVLESHVILHIIEFLPDHEKIKFMSTCKSLYEFRCHVTYNNFYV) enclose the F-box domain. FNIP repeat units follow at residues 124-165 (FNKP…LGHN) and 255-297 (WNFD…FISR).

The polypeptide is Putative F-box and FNIP repeat-containing protein R286 (Acanthamoeba polyphaga (Amoeba)).